The primary structure comprises 202 residues: Potassium-transporting ATPase KdpC subunit (202 aa).

Residues 7-27 (PAIFVLLALTLITGLLYPLAM) form a helical membrane-spanning segment. Residues 66–103 (FHGRPSATSTADPNDSTKTVPAPYNAANSSGSNLGPTS) are disordered. Composition is skewed to polar residues over residues 71–84 (SATS…STKT) and 91–101 (AANSSGSNLGP).

Belongs to the KdpC family. The system is composed of three essential subunits: KdpA, KdpB and KdpC.

The protein resides in the cell inner membrane. Its function is as follows. Part of the high-affinity ATP-driven potassium transport (or Kdp) system, which catalyzes the hydrolysis of ATP coupled with the electrogenic transport of potassium into the cytoplasm. This subunit acts as a catalytic chaperone that increases the ATP-binding affinity of the ATP-hydrolyzing subunit KdpB by the formation of a transient KdpB/KdpC/ATP ternary complex. The chain is Potassium-transporting ATPase KdpC subunit from Bradyrhizobium sp. (strain ORS 278).